The sequence spans 210 residues: Imidazoleglycerol-phosphate dehydratase (210 aa).

The protein belongs to the imidazoleglycerol-phosphate dehydratase family.

It is found in the cytoplasm. It carries out the reaction D-erythro-1-(imidazol-4-yl)glycerol 3-phosphate = 3-(imidazol-4-yl)-2-oxopropyl phosphate + H2O. It participates in amino-acid biosynthesis; L-histidine biosynthesis; L-histidine from 5-phospho-alpha-D-ribose 1-diphosphate: step 6/9. In Mycobacterium bovis (strain ATCC BAA-935 / AF2122/97), this protein is Imidazoleglycerol-phosphate dehydratase.